A 279-amino-acid chain; its full sequence is Fatty acid metabolism regulator protein (279 aa).

The HTH gntR-type domain occupies 6–74; the sequence is KSPAGFAEKY…HGKPTKVNQF (69 aa). The H-T-H motif DNA-binding region spans 34–53; that stretch reads ERELSELIGVTRTTLREVLQ.

In terms of assembly, homodimer.

Its subcellular location is the cytoplasm. In terms of biological role, multifunctional regulator of fatty acid metabolism. This chain is Fatty acid metabolism regulator protein, found in Vibrio parahaemolyticus serotype O3:K6 (strain RIMD 2210633).